A 538-amino-acid polypeptide reads, in one-letter code: Poly [ADP-ribose] polymerase 2 (538 aa).

Positions 1-94 (MSIINDENGR…RDDEPVPNKY (94 aa)) constitute a WGR domain. The tract at residues 104-133 (RQTEKEVKKEEPEPEPKVDEKNTRGRKKRG) is disordered. Residues 105–126 (QTEKEVKKEEPEPEPKVDEKNT) are compositionally biased toward basic and acidic residues. The PARP alpha-helical domain maps to 148-285 (VEEVNEKLKE…GSIEASLELK (138 aa)). Positions 309 to 535 (EPVSEEIAGK…VKVDRLTAKE (227 aa)) constitute a PARP catalytic domain. A disordered region spans residues 357–381 (QEVPKKRGRKSTKTAAPTVPPPTTK).

It belongs to the ARTD/PARP family.

The protein localises to the nucleus. It carries out the reaction NAD(+) + (ADP-D-ribosyl)n-acceptor = nicotinamide + (ADP-D-ribosyl)n+1-acceptor + H(+).. The enzyme catalyses L-aspartyl-[protein] + NAD(+) = 4-O-(ADP-D-ribosyl)-L-aspartyl-[protein] + nicotinamide. The catalysed reaction is L-glutamyl-[protein] + NAD(+) = 5-O-(ADP-D-ribosyl)-L-glutamyl-[protein] + nicotinamide. Inhibited by N-(6-oxo-5,6-dihydrophenanthridin-2-yl)-N,N-dimethylacetamide HCl (PJ34), 1,5-dihydroxyisoquinoline (DHQ) and 3-aminobenzamide (3AB). In terms of biological role, poly[ADP-ribose] polymerase modifies various nuclear proteins by poly(ADP-ribosyl)ation, a post-translational modification synthesized after DNA damage that appears as an obligatory step in a detection/signaling pathway leading to the reparation of DNA strand breaks and programmed cell death. This Caenorhabditis elegans protein is Poly [ADP-ribose] polymerase 2.